The following is an 84-amino-acid chain: Putative defensin-like protein 38 (84 aa).

A signal peptide spans 1-26; that stretch reads MASSKNGTVLFVSLMILLLISTGVKA. 4 disulfides stabilise this stretch: cysteine 28–cysteine 84, cysteine 41–cysteine 65, cysteine 50–cysteine 76, and cysteine 54–cysteine 78.

This sequence belongs to the DEFL family.

It localises to the secreted. This Arabidopsis thaliana (Mouse-ear cress) protein is Putative defensin-like protein 38.